Consider the following 175-residue polypeptide: NADH dehydrogenase [ubiquinone] iron-sulfur protein 4, mitochondrial (175 aa).

The transit peptide at 1 to 42 (MAAVSISVSLRQAMLGRRAMATAAVSVCRVPSRLLSTSTWKL) directs the protein to the mitochondrion. Serine 173 is subject to Phosphoserine.

The protein belongs to the complex I NDUFS4 subunit family. In terms of assembly, this is a component of the iron-sulfur (IP) fragment of the enzyme. Interacts with BCAP31 and TOMM40; the interaction mediates its translocation to the mitochondria; the interaction with BCAP31 is direct.

The protein localises to the mitochondrion inner membrane. Its function is as follows. Accessory subunit of the mitochondrial membrane respiratory chain NADH dehydrogenase (Complex I), that is believed not to be involved in catalysis. Complex I functions in the transfer of electrons from NADH to the respiratory chain. The immediate electron acceptor for the enzyme is believed to be ubiquinone. The chain is NADH dehydrogenase [ubiquinone] iron-sulfur protein 4, mitochondrial (Ndufs4) from Mus musculus (Mouse).